The following is a 340-amino-acid chain: Protein B17 (340 aa).

Belongs to the orthopoxvirus B17 protein family.

The protein is Protein B17 of Vaccinia virus (strain Western Reserve) (VACV).